A 2799-amino-acid polypeptide reads, in one-letter code: E3 ubiquitin-protein ligase UBR5 (2799 aa).

Position 2 is an N-acetylthreonine (T2). Residues 77-88 (DRLELGKPDNND) show a composition bias toward basic and acidic residues. Positions 77-175 (DRLELGKPDN…DRGSGLLGSQ (99 aa)) are disordered. Positions 89–110 (GSKLNSNSGAGRTSRPGRTSDS) are enriched in polar residues. S110 carries the post-translational modification Phosphoserine. Residues 135 to 144 (GVGGSGGGSS) are compositionally biased toward gly residues. The region spanning 184–226 (VIPEELISQAQVVLQGKSRSVIIRELQRTNLDVNLAVNNLLSR) is the UBA domain. Position 327 is a phosphoserine (S327). Residues 328–347 (FDNERGSTSKEGEPNLDKKN) show a composition bias toward basic and acidic residues. Residues 328–352 (FDNERGSTSKEGEPNLDKKNTPVQS) are disordered. S352 and S578 each carry phosphoserine. Residues 579–648 (PESLKNMEKA…APKEEEKVNE (70 aa)) form a disordered region. Positions 583 to 604 (KNMEKASKTTEAKPESKQEPVK) are enriched in basic and acidic residues. S612 is subject to Phosphoserine. A compositionally biased stretch (low complexity) spans 614–628 (ASTCSDASSIASSAS). A Phosphothreonine modification is found at T637. Phosphoserine occurs at positions 808, 928, and 1018. Disordered stretches follow at residues 999–1031 (AGLG…PDPP) and 1052–1075 (TAAT…EPSV). The segment covering 1017–1031 (VSPPIAPPSWVPDPP) has biased composition (pro residues). Polar residues predominate over residues 1052–1073 (TAATGTGQGPSTSTIPGPSTEP). T1115 and T1135 each carry phosphothreonine. The UBR-type zinc finger occupies 1177-1245 (DTCSFTWTGA…EKCKCKTLIA (69 aa)). Zn(2+)-binding residues include C1179, C1196, C1199, C1208, C1211, C1215, H1216, and H1219. A Phosphoserine modification is found at S1227. Zn(2+) is bound by residues C1232, C1234, and C1240. The tract at residues 1299–1318 (REDRNRKTASPEDSDMPDHD) is disordered. S1308, S1355, S1375, and S1481 each carry phosphoserine. Residues 1515–1740 (SVEPLPPRPS…PSSTSTPAAS (226 aa)) form a disordered region. The span at 1524-1537 (SSDQSSSSSQSQSS) shows a compositional bias: low complexity. Residues 1538–1553 (YIIRNPQQRRISQSQP) show a composition bias toward polar residues. S1549 is modified (phosphoserine). 2 stretches are compositionally biased toward acidic residues: residues 1559 to 1574 (EEQD…EVEV) and 1605 to 1614 (HDEDGSDMEL). Residues 1629–1638 (NHSNQDNASG) are compositionally biased toward polar residues. Composition is skewed to low complexity over residues 1641–1657 (SVVT…ASSV), 1668–1681 (SNDS…SSQS), and 1726–1740 (AAST…PAAS). The residue at position 1736 (T1736) is a Phosphothreonine. S1741 carries the post-translational modification Phosphoserine. At Y1746 the chain carries Phosphotyrosine. At S1780 the chain carries Phosphoserine. The tract at residues 1859-1890 (LASAGDPGHPNHPLHASQNSARRERMTAREEA) is disordered. Positions 1879–1890 (ARRERMTAREEA) are enriched in basic and acidic residues. T1969 carries the phosphothreonine modification. The interval 1984 to 2021 (GIDNEDSEHENDDDTNQSATLNDKDDDSLPAETGQNHP) is disordered. Positions 1985-1998 (IDNEDSEHENDDDT) are enriched in acidic residues. S1990, S2026, and S2028 each carry phosphoserine. Residue T2030 is modified to Phosphothreonine. Phosphoserine is present on S2076. The tract at residues 2117 to 2142 (RQKKEGEEQPVLPEETESSKPGPSAH) is disordered. T2213 is subject to Phosphothreonine. Residues S2241 and S2289 each carry the phosphoserine modification. Positions 2323–2392 (HTSLMQRLRN…PSDDPEPLPA (70 aa)) are disordered. Basic and acidic residues-rich tracts occupy residues 2332 to 2348 (NRGE…EMRR) and 2356 to 2368 (SRRD…RRQL). One can recognise a PABC domain in the interval 2377–2454 (PASEGNPSDD…AMELIIAHGR (78 aa)). The region spanning 2462–2799 (LDLGLVDSSE…AIKTKNFGFV (338 aa)) is the HECT domain. Phosphoserine occurs at positions 2469, 2484, and 2486. The tract at residues 2473 to 2493 (VQQENRKRHGSSRSVVDMDLD) is disordered. C2768 acts as the Glycyl thioester intermediate in catalysis.

This sequence belongs to the UBR5 family. In terms of assembly, homotetramer; composed of a dimer of dimers. Associates with CDK9 and TFIIS/TCEA1 and forms a transcription regulatory complex made of CDK9, RNAP II, UBR5 and TFIIS/TCEA1 that can stimulate target gene transcription (e.g. gamma fibrinogen/FGG) by recruiting their promoters. Associates with the E3 ligase complex containing DYRK2, EDD/UBR5, DDB1 and DCAF1 proteins (EDVP complex). Binds TOPBP1. Interacts with PIH1D1. Interacts with CIB1. As to quaternary structure, (Microbial infection) Interacts with human T-cell leukemia virus 1/HTLV-1 protein HBZ; this interaction modulates HBZ stability. Widely expressed. Most abundant in testis and expressed at high levels in brain, pituitary and kidney.

The protein resides in the nucleus. The protein localises to the cytoplasm. The enzyme catalyses S-ubiquitinyl-[E2 ubiquitin-conjugating enzyme]-L-cysteine + [acceptor protein]-L-lysine = [E2 ubiquitin-conjugating enzyme]-L-cysteine + N(6)-ubiquitinyl-[acceptor protein]-L-lysine.. It functions in the pathway protein modification; protein ubiquitination. In terms of biological role, E3 ubiquitin-protein ligase involved in different protein quality control pathways in the cytoplasm and nucleus. Mainly acts as a ubiquitin chain elongator that extends pre-ubiquitinated substrates. Component of the N-end rule pathway: ubiquitinates proteins bearing specific N-terminal residues that are destabilizing according to the N-end rule, leading to their degradation. Recognizes type-1 N-degrons, containing positively charged amino acids (Arg, Lys and His). Together with UBR4, part of a cytoplasm protein quality control pathway that prevents protein aggregation by catalyzing assembly of heterotypic 'Lys-11'-/'Lys-48'-linked branched ubiquitin chains on aggregated proteins, leading to substrate recognition by the segregase p97/VCP and degradation by the proteasome: UBR5 is probably branching multiple 'Lys-48'-linked chains of substrates initially modified with mixed conjugates by UBR4. Together with ITCH, catalyzes 'Lys-48'-/'Lys-63'-branched ubiquitination of TXNIP, leading to its degradation: UBR5 mediates branching of 'Lys-48'-linked chains of substrates initially modified with 'Lys-63'-linked conjugates by ITCH. Catalytic component of a nuclear protein quality control pathway that mediates ubiquitination and degradation of unpaired transcription factors (i.e. transcription factors that are not assembled into functional multiprotein complexes): specifically recognizes and binds degrons that are not accessible when transcription regulators are associated with their coactivators. Ubiquitinates various unpaired transcription regulator (MYC, SUPT4H1, SUPT5H, CDC20 and MCRS1), as well as ligand-bound nuclear receptors (ESR1, NR1H3, NR3C1, PGR, RARA, RXRA AND VDR) that are not associated with their nuclear receptor coactivators (NCOAs). Involved in maturation and/or transcriptional regulation of mRNA by mediating polyubiquitination and activation of CDK9. Also acts as a regulator of DNA damage response by acting as a suppressor of RNF168, an E3 ubiquitin-protein ligase that promotes accumulation of 'Lys-63'-linked histone H2A and H2AX at DNA damage sites, thereby acting as a guard against excessive spreading of ubiquitinated chromatin at damaged chromosomes. Regulates DNA topoisomerase II binding protein (TopBP1) in the DNA damage response. Ubiquitinates acetylated PCK1. Acts as a positive regulator of the canonical Wnt signaling pathway by mediating (1) ubiquitination and stabilization of CTNNB1, and (2) 'Lys-48'-linked ubiquitination and degradation of TLE3. Promotes disassembly of the mitotic checkpoint complex (MCC) from the APC/C complex by catalyzing ubiquitination of BUB1B, BUB3 and CDC20. Plays an essential role in extraembryonic development. Required for the maintenance of skeletal tissue homeostasis by acting as an inhibitor of hedgehog (HH) signaling. This chain is E3 ubiquitin-protein ligase UBR5 (UBR5), found in Homo sapiens (Human).